Consider the following 67-residue polypeptide: Large ribosomal subunit protein bL35 (67 aa).

Belongs to the bacterial ribosomal protein bL35 family.

The sequence is that of Large ribosomal subunit protein bL35 from Rhizorhabdus wittichii (strain DSM 6014 / CCUG 31198 / JCM 15750 / NBRC 105917 / EY 4224 / RW1) (Sphingomonas wittichii).